The sequence spans 285 residues: MISMNPIMIRNNLSRSSSPAAPPITNHTSTVDYFSLKPKLSLDTSSQNDSISTQSSNNDDTHSDQQDHTLYTHNHYFDDDYDDDEDEDFDIRDQLLDPFDKITISNCNEEYYSPLTPFDDQTTSPQDSIISSKSSNKSTTVVPPPQFQLTLPKLTTYSFLIVDDNIINLKILNRILLKLFPKCHIVQIQDSKLVKDILHKQPFDSIFIDIEMPDVNGIDIAQFVRQDSKFDDMGMVAVTTRNSTQDLELFKQCGIDCTFHKPLNYSLDFMANSIDDIIITRKNKI.

2 stretches are compositionally biased toward low complexity: residues 43–58 and 128–138; these read DTSS…SSNN and SIISSKSSNKS. 2 disordered regions span residues 43 to 66 and 114 to 142; these read DTSS…SDQQ and PLTP…TTVV. A Response regulatory domain is found at 158–276; it reads SFLIVDDNII…LDFMANSIDD (119 aa). Aspartate 209 bears the 4-aspartylphosphate mark.

Functionally, required for stress adaptation, morphogenesis and virulence. In Candida dubliniensis (strain CD36 / ATCC MYA-646 / CBS 7987 / NCPF 3949 / NRRL Y-17841) (Yeast), this protein is Stress response regulator protein 1 (SRR1).